We begin with the raw amino-acid sequence, 122 residues long: Large ribosomal subunit protein uL14c (122 aa).

This sequence belongs to the universal ribosomal protein uL14 family. As to quaternary structure, part of the 50S ribosomal subunit.

It is found in the plastid. It localises to the chloroplast. Binds to 23S rRNA. The protein is Large ribosomal subunit protein uL14c of Populus trichocarpa (Western balsam poplar).